We begin with the raw amino-acid sequence, 334 residues long: MIEADRLIQPQLQGQDDVIDRAMRPKLLDEYTGQDDTRAQLKVFIQAAKNREEALDHMLIYGPPGLGKTTLAMIVANEMGVNIKSTSGPVLEKAGDLAALLTNLEAGDVLFIDEIHRLSPVVEEILYPAMEDYQLDIMIGEGPAARSIKLDLPPFTLVGATTRAGALTSPLRARFGIPLRLEFYNVKDLSTIVTRSAQVMGLAIDSEGATEIAKRSRGTPRIANRLLRRVRDYAEVKHDGAVTQKVAEQALDLLDVDGEGFDYMDRKLLLAIIDKFMGGPVGLDNLAAAIGEERETIEDVLEPFLIQQGFIQRTPRGRIATTRAYLHFGMIKPE.

Positions 4-184 (ADRLIQPQLQ…FGIPLRLEFY (181 aa)) are large ATPase domain (RuvB-L). Residues arginine 24, glycine 65, lysine 68, threonine 69, threonine 70, 131–133 (EDY), arginine 174, tyrosine 184, and arginine 221 contribute to the ATP site. Residue threonine 69 coordinates Mg(2+). The interval 185 to 255 (NVKDLSTIVT…VAEQALDLLD (71 aa)) is small ATPAse domain (RuvB-S). A head domain (RuvB-H) region spans residues 258–334 (GEGFDYMDRK…YLHFGMIKPE (77 aa)). Positions 294, 313, and 318 each coordinate DNA.

It belongs to the RuvB family. In terms of assembly, homohexamer. Forms an RuvA(8)-RuvB(12)-Holliday junction (HJ) complex. HJ DNA is sandwiched between 2 RuvA tetramers; dsDNA enters through RuvA and exits via RuvB. An RuvB hexamer assembles on each DNA strand where it exits the tetramer. Each RuvB hexamer is contacted by two RuvA subunits (via domain III) on 2 adjacent RuvB subunits; this complex drives branch migration. In the full resolvosome a probable DNA-RuvA(4)-RuvB(12)-RuvC(2) complex forms which resolves the HJ.

The protein localises to the cytoplasm. It carries out the reaction ATP + H2O = ADP + phosphate + H(+). Its function is as follows. The RuvA-RuvB-RuvC complex processes Holliday junction (HJ) DNA during genetic recombination and DNA repair, while the RuvA-RuvB complex plays an important role in the rescue of blocked DNA replication forks via replication fork reversal (RFR). RuvA specifically binds to HJ cruciform DNA, conferring on it an open structure. The RuvB hexamer acts as an ATP-dependent pump, pulling dsDNA into and through the RuvAB complex. RuvB forms 2 homohexamers on either side of HJ DNA bound by 1 or 2 RuvA tetramers; 4 subunits per hexamer contact DNA at a time. Coordinated motions by a converter formed by DNA-disengaged RuvB subunits stimulates ATP hydrolysis and nucleotide exchange. Immobilization of the converter enables RuvB to convert the ATP-contained energy into a lever motion, pulling 2 nucleotides of DNA out of the RuvA tetramer per ATP hydrolyzed, thus driving DNA branch migration. The RuvB motors rotate together with the DNA substrate, which together with the progressing nucleotide cycle form the mechanistic basis for DNA recombination by continuous HJ branch migration. Branch migration allows RuvC to scan DNA until it finds its consensus sequence, where it cleaves and resolves cruciform DNA. This Shewanella sp. (strain ANA-3) protein is Holliday junction branch migration complex subunit RuvB.